A 701-amino-acid polypeptide reads, in one-letter code: Polyribonucleotide nucleotidyltransferase (701 aa).

Mg(2+) is bound by residues aspartate 485 and aspartate 491. Positions 552–611 (PRIIKIRINPEKIRDVIGKGGAVIRALTEETGTTIDITDDGTVMIACVNAEGGELAKKRI) constitute a KH domain. The S1 motif domain occupies 621–689 (GRVYDGTVLK…DKGRLRLSMK (69 aa)).

This sequence belongs to the polyribonucleotide nucleotidyltransferase family. Mg(2+) serves as cofactor.

Its subcellular location is the cytoplasm. The enzyme catalyses RNA(n+1) + phosphate = RNA(n) + a ribonucleoside 5'-diphosphate. Functionally, involved in mRNA degradation. Catalyzes the phosphorolysis of single-stranded polyribonucleotides processively in the 3'- to 5'-direction. In Nitrosospira multiformis (strain ATCC 25196 / NCIMB 11849 / C 71), this protein is Polyribonucleotide nucleotidyltransferase.